A 58-amino-acid polypeptide reads, in one-letter code: MSKTVVRKNESLDDALRRFKRAVTKAGTLQETRKREFYEKPSVKRKRKSEAARKRKKF.

Residues Phe-37–Phe-58 are disordered. Basic residues predominate over residues Val-43–Phe-58.

It belongs to the bacterial ribosomal protein bS21 family.

The sequence is that of Small ribosomal subunit protein bS21 from Streptococcus sanguinis (strain SK36).